The primary structure comprises 508 residues: ATP synthase subunit alpha (508 aa).

169-176 (GDRQTGKT) lines the ATP pocket.

It belongs to the ATPase alpha/beta chains family. As to quaternary structure, F-type ATPases have 2 components, CF(1) - the catalytic core - and CF(0) - the membrane proton channel. CF(1) has five subunits: alpha(3), beta(3), gamma(1), delta(1), epsilon(1). CF(0) has three main subunits: a(1), b(2) and c(9-12). The alpha and beta chains form an alternating ring which encloses part of the gamma chain. CF(1) is attached to CF(0) by a central stalk formed by the gamma and epsilon chains, while a peripheral stalk is formed by the delta and b chains.

It localises to the cell inner membrane. The enzyme catalyses ATP + H2O + 4 H(+)(in) = ADP + phosphate + 5 H(+)(out). In terms of biological role, produces ATP from ADP in the presence of a proton gradient across the membrane. The alpha chain is a regulatory subunit. The polypeptide is ATP synthase subunit alpha (Allorhizobium ampelinum (strain ATCC BAA-846 / DSM 112012 / S4) (Agrobacterium vitis (strain S4))).